We begin with the raw amino-acid sequence, 201 residues long: 3-isopropylmalate dehydratase small subunit (201 aa).

Belongs to the LeuD family. LeuD type 1 subfamily. Heterodimer of LeuC and LeuD.

The catalysed reaction is (2R,3S)-3-isopropylmalate = (2S)-2-isopropylmalate. It participates in amino-acid biosynthesis; L-leucine biosynthesis; L-leucine from 3-methyl-2-oxobutanoate: step 2/4. Catalyzes the isomerization between 2-isopropylmalate and 3-isopropylmalate, via the formation of 2-isopropylmaleate. In Shigella flexneri serotype 5b (strain 8401), this protein is 3-isopropylmalate dehydratase small subunit.